The chain runs to 50 residues: Insulin-1 (50 aa).

Intrachain disulfides connect cysteine 7–cysteine 36, cysteine 19–cysteine 49, and cysteine 35–cysteine 40.

Belongs to the insulin family. In terms of assembly, heterodimer of a B chain and an A chain linked by two disulfide bonds.

It is found in the secreted. Its function is as follows. Insulin decreases blood glucose concentration. It increases cell permeability to monosaccharides, amino acids and fatty acids. It accelerates glycolysis, the pentose phosphate cycle, and glycogen synthesis in liver. This chain is Insulin-1, found in Thunnus orientalis (North Pacific bluefin tuna).